Here is a 429-residue protein sequence, read N- to C-terminus: Glutamate-1-semialdehyde 2,1-aminomutase 2 (429 aa).

Lysine 268 carries the post-translational modification N6-(pyridoxal phosphate)lysine.

The protein belongs to the class-III pyridoxal-phosphate-dependent aminotransferase family. HemL subfamily. As to quaternary structure, homodimer. The cofactor is pyridoxal 5'-phosphate.

The protein localises to the cytoplasm. It carries out the reaction (S)-4-amino-5-oxopentanoate = 5-aminolevulinate. It functions in the pathway porphyrin-containing compound metabolism; protoporphyrin-IX biosynthesis; 5-aminolevulinate from L-glutamyl-tRNA(Glu): step 2/2. This is Glutamate-1-semialdehyde 2,1-aminomutase 2 from Staphylococcus aureus (strain Mu50 / ATCC 700699).